Reading from the N-terminus, the 209-residue chain is Uracil phosphoribosyltransferase (209 aa).

5-phospho-alpha-D-ribose 1-diphosphate is bound by residues Arg-79, Arg-104, and 131-139 (DPMLATGGS). Uracil-binding positions include Ile-194 and 199 to 201 (GDA). Asp-200 is a 5-phospho-alpha-D-ribose 1-diphosphate binding site.

Belongs to the UPRTase family. Requires Mg(2+) as cofactor.

It catalyses the reaction UMP + diphosphate = 5-phospho-alpha-D-ribose 1-diphosphate + uracil. It functions in the pathway pyrimidine metabolism; UMP biosynthesis via salvage pathway; UMP from uracil: step 1/1. With respect to regulation, allosterically activated by GTP. Its function is as follows. Catalyzes the conversion of uracil and 5-phospho-alpha-D-ribose 1-diphosphate (PRPP) to UMP and diphosphate. In Chromohalobacter salexigens (strain ATCC BAA-138 / DSM 3043 / CIP 106854 / NCIMB 13768 / 1H11), this protein is Uracil phosphoribosyltransferase.